The following is a 473-amino-acid chain: Glycogen synthase (473 aa).

K15 is a binding site for ADP-alpha-D-glucose.

It belongs to the glycosyltransferase 1 family. Bacterial/plant glycogen synthase subfamily.

It catalyses the reaction [(1-&gt;4)-alpha-D-glucosyl](n) + ADP-alpha-D-glucose = [(1-&gt;4)-alpha-D-glucosyl](n+1) + ADP + H(+). It participates in glycan biosynthesis; glycogen biosynthesis. Its function is as follows. Synthesizes alpha-1,4-glucan chains using ADP-glucose. The protein is Glycogen synthase of Flavobacterium johnsoniae (strain ATCC 17061 / DSM 2064 / JCM 8514 / BCRC 14874 / CCUG 350202 / NBRC 14942 / NCIMB 11054 / UW101) (Cytophaga johnsonae).